A 181-amino-acid chain; its full sequence is ATP-dependent protease subunit HslV (181 aa).

Residue Thr6 is part of the active site. Na(+)-binding residues include Ala162, Cys165, and Thr168.

This sequence belongs to the peptidase T1B family. HslV subfamily. As to quaternary structure, a double ring-shaped homohexamer of HslV is capped on each side by a ring-shaped HslU homohexamer. The assembly of the HslU/HslV complex is dependent on binding of ATP.

The protein localises to the cytoplasm. It carries out the reaction ATP-dependent cleavage of peptide bonds with broad specificity.. Its activity is regulated as follows. Allosterically activated by HslU binding. In terms of biological role, protease subunit of a proteasome-like degradation complex believed to be a general protein degrading machinery. This is ATP-dependent protease subunit HslV from Solidesulfovibrio magneticus (strain ATCC 700980 / DSM 13731 / RS-1) (Desulfovibrio magneticus).